The following is a 289-amino-acid chain: Glycine--tRNA ligase alpha subunit (289 aa).

This sequence belongs to the class-II aminoacyl-tRNA synthetase family. Tetramer of two alpha and two beta subunits.

It is found in the cytoplasm. It catalyses the reaction tRNA(Gly) + glycine + ATP = glycyl-tRNA(Gly) + AMP + diphosphate. The polypeptide is Glycine--tRNA ligase alpha subunit (Prochlorococcus marinus (strain MIT 9515)).